A 213-amino-acid polypeptide reads, in one-letter code: Holliday junction resolvase RecU (213 aa).

Mg(2+)-binding residues include Thr99, Asp101, Glu114, and Gln133.

Belongs to the RecU family. Mg(2+) serves as cofactor.

The protein localises to the cytoplasm. The enzyme catalyses Endonucleolytic cleavage at a junction such as a reciprocal single-stranded crossover between two homologous DNA duplexes (Holliday junction).. Functionally, endonuclease that resolves Holliday junction intermediates in genetic recombination. Cleaves mobile four-strand junctions by introducing symmetrical nicks in paired strands. Promotes annealing of linear ssDNA with homologous dsDNA. Required for DNA repair, homologous recombination and chromosome segregation. This chain is Holliday junction resolvase RecU, found in Lactococcus lactis subsp. cremoris (strain MG1363).